The sequence spans 171 residues: MDYFTLFGLPARYQIDTQALSLRFQDLQRQYHPDKFANGTQAQQLAAVQQSATINQAWQTLRHPLTRAEYLLSLHGFDLASEQHTVRDTAFLMEQLTLCEELDDIEQSKDDVRLESFIKRVQKMFDARLQQMVEQLDNAAWDAAADTVRKLRFLDKLRSSAEQLEEKLLDF.

A J domain is found at 2 to 74; sequence DYFTLFGLPA…LTRAEYLLSL (73 aa).

The protein belongs to the HscB family. In terms of assembly, interacts with HscA and stimulates its ATPase activity. Interacts with IscU.

Its function is as follows. Co-chaperone involved in the maturation of iron-sulfur cluster-containing proteins. Seems to help targeting proteins to be folded toward HscA. The polypeptide is Co-chaperone protein HscB (Salmonella choleraesuis (strain SC-B67)).